Reading from the N-terminus, the 290-residue chain is GTPase Era (290 aa).

Residues 2–144 (KVLKVGVLGP…AIILEEFKPQ (143 aa)) form the Era-type G domain. Residues 10 to 17 (GPTNAGKS) are G1. 10-17 (GPTNAGKS) is a binding site for GTP. A G2 region spans residues 36 to 40 (NTTLL). The G3 stretch occupies residues 58 to 61 (DVPG). 58–62 (DVPGF) serves as a coordination point for GTP. Residues 97-100 (NKIE) are G4. Residues 121-123 (INK) form a G5 region. 122-125 (NKFH) is a binding site for GTP. The KH type-2 domain maps to 201 to 279 (CKNEIPHIAR…FIDIFVKTEK (79 aa)).

It belongs to the TRAFAC class TrmE-Era-EngA-EngB-Septin-like GTPase superfamily. Era GTPase family. Monomer.

The protein localises to the cytoplasm. The protein resides in the cell membrane. Functionally, an essential GTPase that binds both GDP and GTP, with rapid nucleotide exchange. Plays a role in 16S rRNA processing and 30S ribosomal subunit biogenesis and possibly also in cell cycle regulation and energy metabolism. The sequence is that of GTPase Era from Mycoplasma genitalium (strain ATCC 33530 / DSM 19775 / NCTC 10195 / G37) (Mycoplasmoides genitalium).